The primary structure comprises 253 residues: NAC transcription factor 32 (253 aa).

The NAC domain maps to 10–160 (FPPGFRFHPT…DWVLCRIYNK (151 aa)). The DNA-binding element occupies 106–166 (VGIKKALVFY…IYNKKGVIEK (61 aa)).

As to expression, expressed in germinating seeds, roots, leaf veins, open flowers and silique stalks.

The protein localises to the nucleus. Transcriptional activator that positively regulates age-dependent senescence, dark-induced leaf senescence and stress-induced senescence. Regulates leaf senescence through the modulation of the expression of senescence-associated genes SGR1/NYE1, SAG113 and SAUR36/SAG201, which are involved in chlorophyll degradation, and abscisic acid (ABA) and auxin promotion of senescence, respectively. Promotes reactive oxygen species (ROS) production during age-dependent and stress-induced senescence. Positively regulates auxin-mediated responses in roots. Stress-responsive NAC transcription factor involved in ABA-inducible leaf senescence signaling. Required for normal seed development and morphology. The sequence is that of NAC transcription factor 32 from Arabidopsis thaliana (Mouse-ear cress).